The primary structure comprises 390 residues: Heparan sulfate glucosamine 3-O-sulfotransferase 3B1 (390 aa).

Residues 1-25 (MGQRLSGGRSCLDVPGRLLPQPPPP) form a disordered region. The Cytoplasmic segment spans residues 1 to 32 (MGQRLSGGRSCLDVPGRLLPQPPPPPPPVRRK). Residues 33–53 (LALLFAMLCVWLYMFLYSCAG) traverse the membrane as a helical; Signal-anchor for type II membrane protein segment. The Lumenal portion of the chain corresponds to 54–390 (SCAAAPGLLL…QMTGHDFGWD (337 aa)). The tract at residues 74 to 133 (PPALATAPDGTPPRLPFRAPPATPLASGKEMAEGAASPEEQSPEVPDSPSPISSFFSGSG) is disordered. Residues 83-96 (GTPPRLPFRAPPAT) are compositionally biased toward pro residues. Over residues 123–133 (SPISSFFSGSG) the composition is skewed to low complexity. 147–151 (KGGTR) provides a ligand contact to 3'-phosphoadenylyl sulfate. Residues 169–175 (EPHFFDR) and 200–203 (KTPS) each bind substrate. Residues Arg-228 and Ser-236 each contribute to the 3'-phosphoadenylyl sulfate site. An N-linked (GlcNAc...) asparagine glycan is attached at Asn-258. Residue 268–269 (WS) coordinates substrate. N-linked (GlcNAc...) asparagine glycosylation is present at Asn-329. Cys-336 and Cys-348 form a disulfide bridge. A 3'-phosphoadenylyl sulfate-binding site is contributed by 353–357 (KGRTH).

Belongs to the sulfotransferase 1 family. As to expression, ubiquitous. Most abundant in liver and placenta, followed by heart and kidney.

Its subcellular location is the golgi apparatus membrane. It catalyses the reaction alpha-D-glucosaminyl-[heparan sulfate](n) + 3'-phosphoadenylyl sulfate = 3-sulfo-alpha-D-glucosaminyl-[heparan sulfate](n) + adenosine 3',5'-bisphosphate + H(+). In terms of biological role, sulfotransferase that utilizes 3'-phospho-5'-adenylyl sulfate (PAPS) to catalyze the transfer of a sulfo group to an N-unsubstituted glucosamine linked to a 2-O-sulfo iduronic acid unit on heparan sulfate. Catalyzes the O-sulfation of glucosamine in IdoUA2S-GlcNS and also in IdoUA2S-GlcNH2. The substrate-specific O-sulfation generates an enzyme-modified heparan sulfate which acts as a binding receptor to Herpes simplex virus-1 (HSV-1) and permits its entry. Unlike HS3ST1/3-OST-1, does not convert non-anticoagulant heparan sulfate to anticoagulant heparan sulfate. The polypeptide is Heparan sulfate glucosamine 3-O-sulfotransferase 3B1 (HS3ST3B1) (Homo sapiens (Human)).